Reading from the N-terminus, the 194-residue chain is Peptidyl-tRNA hydrolase (194 aa).

Tyrosine 17 contacts tRNA. Histidine 22 serves as the catalytic Proton acceptor. TRNA is bound by residues phenylalanine 68, asparagine 70, and asparagine 116.

This sequence belongs to the PTH family. As to quaternary structure, monomer.

It localises to the cytoplasm. It catalyses the reaction an N-acyl-L-alpha-aminoacyl-tRNA + H2O = an N-acyl-L-amino acid + a tRNA + H(+). Functionally, hydrolyzes ribosome-free peptidyl-tRNAs (with 1 or more amino acids incorporated), which drop off the ribosome during protein synthesis, or as a result of ribosome stalling. Its function is as follows. Catalyzes the release of premature peptidyl moieties from peptidyl-tRNA molecules trapped in stalled 50S ribosomal subunits, and thus maintains levels of free tRNAs and 50S ribosomes. The chain is Peptidyl-tRNA hydrolase from Pasteurella multocida (strain Pm70).